A 202-amino-acid chain; its full sequence is Nascent polypeptide-associated complex subunit alpha (202 aa).

Over residues 1 to 19 (MADPRVEELPDEEVPKTNV) the composition is skewed to basic and acidic residues. The disordered stretch occupies residues 1 to 42 (MADPRVEELPDEEVPKTNVEDAGSSSESEAGDEPTIPGGAAV). One can recognise an NAC-A/B domain in the interval 46–111 (SRNEKKARKA…AKIEDLNATA (66 aa)). Over residues 117–126 (QQLAEAAANE) the composition is skewed to low complexity. A disordered region spans residues 117–165 (QQLAEAAANEHAGHDHEHDHGKGKAPEAEAKKEEEEDDGEEVDESGLEA). Residues 127–149 (HAGHDHEHDHGKGKAPEAEAKKE) show a composition bias toward basic and acidic residues. Over residues 150 to 162 (EEEDDGEEVDESG) the composition is skewed to acidic residues. The region spanning 163-202 (LEAKDIELVMAQANVSRKKAVKALRENDNDIVNSIMALSI) is the UBA domain.

This sequence belongs to the NAC-alpha family. Part of the nascent polypeptide-associated complex (NAC), consisting of egd2 and egd1. NAC associates with ribosomes via egd1.

It localises to the cytoplasm. The protein resides in the nucleus. In terms of biological role, component of the nascent polypeptide-associated complex (NAC), a dynamic component of the ribosomal exit tunnel, protecting the emerging polypeptides from interaction with other cytoplasmic proteins to ensure appropriate nascent protein targeting. The NAC complex also promotes mitochondrial protein import by enhancing productive ribosome interactions with the outer mitochondrial membrane and blocks the inappropriate interaction of ribosomes translating non-secretory nascent polypeptides with translocation sites in the membrane of the endoplasmic reticulum. Egd2 may also be involved in transcription regulation. The polypeptide is Nascent polypeptide-associated complex subunit alpha (egd2) (Aspergillus niger (strain ATCC MYA-4892 / CBS 513.88 / FGSC A1513)).